The chain runs to 306 residues: Ribosomal protein L11 methyltransferase (306 aa).

The S-adenosyl-L-methionine site is built by Thr154, Gly179, Asp201, and Asn242.

Belongs to the methyltransferase superfamily. PrmA family.

It is found in the cytoplasm. It catalyses the reaction L-lysyl-[protein] + 3 S-adenosyl-L-methionine = N(6),N(6),N(6)-trimethyl-L-lysyl-[protein] + 3 S-adenosyl-L-homocysteine + 3 H(+). Its function is as follows. Methylates ribosomal protein L11. The polypeptide is Ribosomal protein L11 methyltransferase (Stenotrophomonas maltophilia (strain R551-3)).